The primary structure comprises 545 residues: CTP synthase (545 aa).

The amidoligase domain stretch occupies residues 1 to 266; that stretch reads MTTNYIFVTG…DDYICKRFGL (266 aa). Serine 14 contacts CTP. Serine 14 lines the UTP pocket. Residues 15 to 20 and aspartate 72 each bind ATP; that span reads SLGKGI. Residues aspartate 72 and glutamate 140 each coordinate Mg(2+). CTP-binding positions include 147 to 149, 187 to 192, and lysine 223; these read DIE and KTKPTQ. UTP contacts are provided by residues 187-192 and lysine 223; that span reads KTKPTQ. Residue 239-241 participates in ATP binding; it reads KDV. Residues 291 to 542 form the Glutamine amidotransferase type-1 domain; the sequence is TIGMVGKYIA…VKAAGEYQKR (252 aa). Glycine 352 is an L-glutamine binding site. The Nucleophile; for glutamine hydrolysis role is filled by cysteine 379. L-glutamine-binding positions include 380 to 383, glutamate 403, and arginine 470; that span reads LGMQ. Residues histidine 515 and glutamate 517 contribute to the active site.

Belongs to the CTP synthase family. As to quaternary structure, homotetramer.

It carries out the reaction UTP + L-glutamine + ATP + H2O = CTP + L-glutamate + ADP + phosphate + 2 H(+). The enzyme catalyses L-glutamine + H2O = L-glutamate + NH4(+). The catalysed reaction is UTP + NH4(+) + ATP = CTP + ADP + phosphate + 2 H(+). Its pathway is pyrimidine metabolism; CTP biosynthesis via de novo pathway; CTP from UDP: step 2/2. Its activity is regulated as follows. Allosterically activated by GTP, when glutamine is the substrate; GTP has no effect on the reaction when ammonia is the substrate. The allosteric effector GTP functions by stabilizing the protein conformation that binds the tetrahedral intermediate(s) formed during glutamine hydrolysis. Inhibited by the product CTP, via allosteric rather than competitive inhibition. In terms of biological role, catalyzes the ATP-dependent amination of UTP to CTP with either L-glutamine or ammonia as the source of nitrogen. Regulates intracellular CTP levels through interactions with the four ribonucleotide triphosphates. The chain is CTP synthase from Sodalis glossinidius (strain morsitans).